The chain runs to 389 residues: Arrestin-C (389 aa).

The protein belongs to the arrestin family. Retina and pineal gland.

In terms of biological role, may play a role in an as yet undefined retina-specific signal transduction. Could bind to photoactivated-phosphorylated red/green opsins. The sequence is that of Arrestin-C (arr3) from Aquarana catesbeiana (American bullfrog).